Reading from the N-terminus, the 392-residue chain is Selenide, water dikinase 1 (392 aa).

An N-acetylserine modification is found at Ser2. Cys31 is a catalytic residue. ATP is bound by residues Lys32, 67–69, Asp87, Asp110, and 161–164; these read GMD and GGQT. A Mg(2+)-binding site is contributed by Asp69. Mg(2+) is bound at residue Asp110. Asp265 serves as a coordination point for Mg(2+).

Belongs to the selenophosphate synthase 1 family. Class II subfamily. As to quaternary structure, homodimer. Mg(2+) serves as cofactor.

It localises to the cell membrane. The protein resides in the nucleus membrane. The enzyme catalyses hydrogenselenide + ATP + H2O = selenophosphate + AMP + phosphate + 2 H(+). Functionally, synthesizes selenophosphate from selenide and ATP. This chain is Selenide, water dikinase 1 (Sephs1), found in Mus musculus (Mouse).